A 101-amino-acid chain; its full sequence is Iron-sulfur cluster assembly protein CyaY (101 aa).

Belongs to the frataxin family.

Functionally, involved in iron-sulfur (Fe-S) cluster assembly. May act as a regulator of Fe-S biogenesis. The sequence is that of Iron-sulfur cluster assembly protein CyaY from Rickettsia felis (strain ATCC VR-1525 / URRWXCal2) (Rickettsia azadi).